The primary structure comprises 141 residues: Large ribosomal subunit protein uL11 (141 aa).

This sequence belongs to the universal ribosomal protein uL11 family. In terms of assembly, part of the ribosomal stalk of the 50S ribosomal subunit. Interacts with L10 and the large rRNA to form the base of the stalk. L10 forms an elongated spine to which L12 dimers bind in a sequential fashion forming a multimeric L10(L12)X complex. One or more lysine residues are methylated.

In terms of biological role, forms part of the ribosomal stalk which helps the ribosome interact with GTP-bound translation factors. The protein is Large ribosomal subunit protein uL11 of Aster yellows witches'-broom phytoplasma (strain AYWB).